The following is a 262-amino-acid chain: Iso-A82775C biosynthesis cluster protein B (262 aa).

Its function is as follows. Part of the gene cluster that mediates the biosynthesis of iso-A82775C, a enylepoxycyclohexane and biosynthetic precursor of the chloropestolide anticancer natural products. Within the cluster, the prenyltransferase iacE prenylates siccayne to generate pestalodiol E, using dimethylallyl diphosphate (DMAPP) as cosubstrate. The probable oxidoreductase iacF is then involved in the epoxidation of pestalodiol F to pestalodiol F, which is further converted to pestalofone A by the short-chain dehydrogenase/reductase iacG. Iso-A82775C is subsequently generated from pestalofone A by the short-chain dehydrogenase/reductase iacC. Iso-A82775C is further condensed with maldoxin via a Diels-Alder reaction to produce the anticancer natural products chloropestolides A to E. The sequence is that of Iso-A82775C biosynthesis cluster protein B from Pestalotiopsis fici (strain W106-1 / CGMCC3.15140).